We begin with the raw amino-acid sequence, 185 residues long: Ribosome-recycling factor (185 aa).

This sequence belongs to the RRF family.

It localises to the cytoplasm. In terms of biological role, responsible for the release of ribosomes from messenger RNA at the termination of protein biosynthesis. May increase the efficiency of translation by recycling ribosomes from one round of translation to another. The protein is Ribosome-recycling factor of Vibrio vulnificus (strain YJ016).